Consider the following 239-residue polypeptide: Pimeloyl-[acyl-carrier protein] methyl ester esterase (239 aa).

Residues Trp-20, 77–78 (SM), and 138–142 (FISLQ) contribute to the substrate site. The active-site Nucleophile is the Ser-77. Active-site residues include Asp-192 and His-220. A substrate-binding site is contributed by His-220.

The protein belongs to the AB hydrolase superfamily. Carboxylesterase BioH family. In terms of assembly, monomer.

It localises to the cytoplasm. The catalysed reaction is 6-carboxyhexanoyl-[ACP] methyl ester + H2O = 6-carboxyhexanoyl-[ACP] + methanol + H(+). It functions in the pathway cofactor biosynthesis; biotin biosynthesis. The physiological role of BioH is to remove the methyl group introduced by BioC when the pimeloyl moiety is complete. It allows to synthesize pimeloyl-ACP via the fatty acid synthetic pathway through the hydrolysis of the ester bonds of pimeloyl-ACP esters. In Legionella pneumophila (strain Paris), this protein is Pimeloyl-[acyl-carrier protein] methyl ester esterase.